We begin with the raw amino-acid sequence, 466 residues long: Sulfate adenylyltransferase subunit 1 (466 aa).

One can recognise a tr-type G domain in the interval 22 to 237 (KELVRFLTCG…LNTIDVKTQE (216 aa)). Positions 31 to 38 (GSVDDGKS) are G1. Position 31–38 (31–38 (GSVDDGKS)) interacts with GTP. A G2 region spans residues 89–93 (GITID). The interval 110-113 (DTPG) is G3. Residues 110-114 (DTPGH) and 165-168 (NKMD) contribute to the GTP site. Residues 165 to 168 (NKMD) are G4. The tract at residues 202–204 (SAL) is G5.

Belongs to the TRAFAC class translation factor GTPase superfamily. Classic translation factor GTPase family. CysN/NodQ subfamily. In terms of assembly, heterodimer composed of CysD, the smaller subunit, and CysN.

The catalysed reaction is sulfate + ATP + H(+) = adenosine 5'-phosphosulfate + diphosphate. It participates in sulfur metabolism; hydrogen sulfide biosynthesis; sulfite from sulfate: step 1/3. Its function is as follows. With CysD forms the ATP sulfurylase (ATPS) that catalyzes the adenylation of sulfate producing adenosine 5'-phosphosulfate (APS) and diphosphate, the first enzymatic step in sulfur assimilation pathway. APS synthesis involves the formation of a high-energy phosphoric-sulfuric acid anhydride bond driven by GTP hydrolysis by CysN coupled to ATP hydrolysis by CysD. The chain is Sulfate adenylyltransferase subunit 1 from Colwellia psychrerythraea (strain 34H / ATCC BAA-681) (Vibrio psychroerythus).